A 293-amino-acid polypeptide reads, in one-letter code: Glycine--tRNA ligase alpha subunit (293 aa).

The protein belongs to the class-II aminoacyl-tRNA synthetase family. In terms of assembly, tetramer of two alpha and two beta subunits.

The protein localises to the cytoplasm. It catalyses the reaction tRNA(Gly) + glycine + ATP = glycyl-tRNA(Gly) + AMP + diphosphate. This Prochlorococcus marinus (strain MIT 9211) protein is Glycine--tRNA ligase alpha subunit.